We begin with the raw amino-acid sequence, 408 residues long: Aspartate aminotransferase (408 aa).

Glycine 45, tryptophan 134, and asparagine 184 together coordinate L-aspartate. N6-(pyridoxal phosphate)lysine is present on lysine 247. Arginine 382 contacts L-aspartate.

Belongs to the class-I pyridoxal-phosphate-dependent aminotransferase family. Homodimer. The cofactor is pyridoxal 5'-phosphate.

It is found in the cytoplasm. It catalyses the reaction L-aspartate + 2-oxoglutarate = oxaloacetate + L-glutamate. Its function is as follows. Catalyzes the reversible conversion of aspartate and 2-oxoglutarate to glutamate and oxaloacetate. Does not have prephenate aminotransferase activity. The chain is Aspartate aminotransferase from Streptomyces avermitilis (strain ATCC 31267 / DSM 46492 / JCM 5070 / NBRC 14893 / NCIMB 12804 / NRRL 8165 / MA-4680).